A 351-amino-acid chain; its full sequence is MAAAANSGSSLPLFDCPTWAGKPPPGLHLDVVKGDKLIEKLIIDEKKYYLFGRNPDLCDFTIDHQSCSRVHAALVYHKHLKRVFLIDLNSTHGTFLGHIRLEPHKPQQIPIDSTVSFGASTRAYTLREKPQTLPSAVKGDEKMGGEDDELKGLLGLPEEETELDNLTEFNTAHNKRISTLTIEEGNLDIQRPKRKRKNSRVTFSEDDEIINPEDVDPSVGRFRNMVQTAVVPVKKKRVEGPGSLVLEESGSRRMQNFAFSGGLYGGLPPTHSEAGSQPHGIHGTALIGGLPMPYPNLAPDVDLTPVVPSAVNMNPAPNPAVYNPEAVNEPKKKKYAKEAWPGKKPTPSLLI.

The interaction with CDC5L, SF3B1 and MELK stretch occupies residues 1 to 142; it reads MAAAANSGSS…LPSAVKGDEK (142 aa). Residues 49 to 101 enclose the FHA domain; sequence YLFGRNPDLCDFTIDHQSCSRVHAALVYHKHLKRVFLIDLNSTHGTFLGHIRL. Positions 143–224 are interaction with EED; it reads MGGEDDELKG…VDPSVGRFRN (82 aa). A Phosphothreonine; by CK2; in vitro modification is found at Thr161. At Ser178 the chain carries Phosphoserine; by PKA; in vitro. 2 short sequence motifs (nuclear localization signal) span residues 185-209 and 210-240; these read GNLDIQRPKRKRKNSRVTFSEDDEI and INPEDVDPSVGRFRNMVQTAVVPVKKKRVEG. Residues 191–200 form an involved in PP-1 inhibition region; sequence RPKRKRKNSR. The residue at position 199 (Ser199) is a Phosphoserine. The involved in PP-1 binding stretch occupies residues 200–203; it reads RVTF. The residue at position 204 (Ser204) is a Phosphoserine. Residue Ser249 is modified to Phosphoserine. At Tyr264 the chain carries Phosphotyrosine. The interaction with EED stretch occupies residues 310 to 329; that stretch reads AVNMNPAPNPAVYNPEAVNE. The segment at 316 to 351 is disordered; the sequence is APNPAVYNPEAVNEPKKKKYAKEAWPGKKPTPSLLI. The segment at 330–351 is RNA-binding; that stretch reads PKKKKYAKEAWPGKKPTPSLLI. Residues 331–337 are involved in PP-1 inhibition; that stretch reads KKKKYAK. A Phosphotyrosine modification is found at Tyr335.

In terms of assembly, interacts with phosphorylated CDC5L, SF3B1 and MELK. Interacts with EED. Part of a complex consisting of PPP1R8, EED, HDAC2 and PP-1. Part of the spliceosome. Interacts with PPP1CA, PPP1CB and PPP1CC. The N-terminus is blocked. Post-translationally, inactivated by phosphorylation on Ser-199 or Ser-204.

The protein localises to the nucleus. It is found in the nucleus speckle. Inhibitor subunit of the major nuclear protein phosphatase-1 (PP-1). It has RNA-binding activity but does not cleave RNA and may target PP-1 to RNA-associated substrates. May also be involved in pre-mRNA splicing. Binds DNA and might act as a transcriptional repressor. Seems to be required for cell proliferation. This chain is Nuclear inhibitor of protein phosphatase 1 (PPP1R8), found in Bos taurus (Bovine).